Reading from the N-terminus, the 267-residue chain is Large ribosomal subunit protein bL9m (267 aa).

The N-terminal 52 residues, 1 to 52, are a transit peptide targeting the mitochondrion; the sequence is MAAPVVTAPGRALLRAGAGRLLRGGVQELLRPRHEGNAPDLACNFSLSQNRG.

Belongs to the bacterial ribosomal protein bL9 family. In terms of assembly, component of the mitochondrial large ribosomal subunit (mt-LSU). Mature mammalian 55S mitochondrial ribosomes consist of a small (28S) and a large (39S) subunit. The 28S small subunit contains a 12S ribosomal RNA (12S mt-rRNA) and 30 different proteins. The 39S large subunit contains a 16S rRNA (16S mt-rRNA), a copy of mitochondrial valine transfer RNA (mt-tRNA(Val)), which plays an integral structural role, and 52 different proteins.

It is found in the mitochondrion. The protein is Large ribosomal subunit protein bL9m (MRPL9) of Homo sapiens (Human).